The following is a 589-amino-acid chain: Peroxisomal biogenesis factor 8 (589 aa).

The Microbody targeting signal motif lies at 587–589 (SKL).

The protein localises to the peroxisome matrix. Functionally, required for peroxisome assembly. The sequence is that of Peroxisomal biogenesis factor 8 (PEX8) from Saccharomyces cerevisiae (strain ATCC 204508 / S288c) (Baker's yeast).